Consider the following 193-residue polypeptide: dCTP deaminase (193 aa).

DCTP is bound by residues 110–115, Asp-128, 136–138, Tyr-171, Lys-178, and Gln-182; these read RSSLAR and VLE. Catalysis depends on Glu-138, which acts as the Proton donor/acceptor. Residues 169 to 193 are disordered; it reads RPYNRRQDAKYKDQQGAVASRIDKD.

The protein belongs to the dCTP deaminase family. Homotrimer.

The catalysed reaction is dCTP + H2O + H(+) = dUTP + NH4(+). It participates in pyrimidine metabolism; dUMP biosynthesis; dUMP from dCTP (dUTP route): step 1/2. Catalyzes the deamination of dCTP to dUTP. In Pectobacterium carotovorum subsp. carotovorum (strain PC1), this protein is dCTP deaminase.